The primary structure comprises 783 residues: Protein phosphatase 2C 29 (783 aa).

Residues 151–194 (SFSALPLQPGPDRSGLFMSGPIERGATSGPLDPPAGEISRSNSA) form a disordered region. Position 199 is a phosphoserine (Ser-199). Positions 260–770 (SSGENDLQWA…DDCTVLVIAL (511 aa)) constitute a PPM-type phosphatase domain. Residues Asp-295 and Gly-296 each coordinate Mn(2+). The tract at residues 555–595 (ETGESVETAERVEERRNDLDRDDGNKEPLVVDSSDSTVNNE) is disordered. The segment covering 562–580 (TAERVEERRNDLDRDDGNK) has biased composition (basic and acidic residues). Mn(2+)-binding residues include Asp-701 and Asp-761.

Belongs to the PP2C family. Mg(2+) serves as cofactor. The cofactor is Mn(2+). As to expression, expressed in roots, leaves, stems, inflorescences, flowers and developing vascular tissue.

The protein resides in the nucleus. It carries out the reaction O-phospho-L-seryl-[protein] + H2O = L-seryl-[protein] + phosphate. It catalyses the reaction O-phospho-L-threonyl-[protein] + H2O = L-threonyl-[protein] + phosphate. Functionally, involved in the regulation of pedicel length and of CLAVATA pathways controlling stem cell identity at shoot and flower meristems. The chain is Protein phosphatase 2C 29 (PLL1) from Arabidopsis thaliana (Mouse-ear cress).